A 144-amino-acid chain; its full sequence is MARSILVLHGPNLNLLGTREPEVYGSRTLAQINEDLSSLANELGVSLSAWQSNHEGALVDRIQAASKDGTDFIIINAAAYTHTSVALRDALAGVAIPFIEVHLSNLYKRESFRHHSYLSDIAVGLISGLGADGYEAALRYAVRH.

Residue Y24 is the Proton acceptor of the active site. Substrate is bound by residues N76, H82, and D89. The active-site Proton donor is the H102. Substrate is bound by residues 103 to 104 and R113; that span reads LS.

The protein belongs to the type-II 3-dehydroquinase family. As to quaternary structure, homododecamer.

The enzyme catalyses 3-dehydroquinate = 3-dehydroshikimate + H2O. It functions in the pathway metabolic intermediate biosynthesis; chorismate biosynthesis; chorismate from D-erythrose 4-phosphate and phosphoenolpyruvate: step 3/7. Catalyzes a trans-dehydration via an enolate intermediate. This Bordetella avium (strain 197N) protein is 3-dehydroquinate dehydratase.